Consider the following 751-residue polypeptide: Nibrin (751 aa).

The FHA domain occupies 24 to 83; that stretch reads YVVGRKNCGILIENDQSISRNHAVLTVNFPVTSLSQTDEIPTLTIKDNSKYGTFVNEEKM. BRCT domains are found at residues 105-181 and 224-315; these read KFRV…SEFL and GKTF…LAVI. The segment at 111–328 is mediates interaction with SP100; that stretch reads EPLVVCSSCL…TENYCNPQGQ (218 aa). Residues 221–403 form an interaction with MTOR, MAPKAP1 and RICTOR region; the sequence is IFKGKTFVFL…SRKLSQETFN (183 aa). T337 bears the Phosphothreonine mark. S343 is subject to Phosphoserine; by ATM. Residues S347 and S398 each carry the phosphoserine modification. Residues 389–418 form a disordered region; that stretch reads GLEQSSRKLSQETFNIKEAPKPSSKANNVA. S433 carries the post-translational modification Phosphoserine; by CDK2. Residue K436 forms a Glycyl lysine isopeptide (Lys-Gly) (interchain with G-Cter in ubiquitin) linkage. 2 disordered regions span residues 444–479 and 491–550; these read KDWT…SSCK and EQTQ…RKRK. Positions 446–457 are enriched in polar residues; it reads WTSQQQQNSIKN. Residues 461 to 467 carry the Nuclear localization signal motif; sequence PCTRKRE. Basic and acidic residues-rich tracts occupy residues 502-518 and 528-539; these read KSKE…READ and ELNRKSPDRKPL. S508 carries the post-translational modification Phosphoserine. Glycyl lysine isopeptide (Lys-Gly) (interchain with G-Cter in SUMO2) cross-links involve residues K569 and K580. Residues 576 to 645 are disordered; that stretch reads VKVEKQEADD…ANSDGLQDSS (70 aa). Composition is skewed to basic and acidic residues over residues 577-599 and 615-636; these read KVEK…ERNR and EDER…HEIA. Glycyl lysine isopeptide (Lys-Gly) (interchain with G-Cter in ubiquitin) cross-links involve residues K684, K688, and K733. The segment covering 731 to 742 has biased composition (basic and acidic residues); it reads QAKEESLADDLF. The interval 731–751 is disordered; it reads QAKEESLADDLFRYNPNVKRR. The short motif at 738–747 is the FxF/Y motif element; that stretch reads ADDLFRYNPN.

It belongs to the Nibrin family. As to quaternary structure, component of the MRN complex composed of two heterodimers RAD50 and MRE11 associated with a single NBN. The MRN complexes dimerize on DNA to form joined MRN-MRN oligomers required for DNA double-strand break repair. As part of the MRN complex, interacts with MCM9; the interaction recruits the complex to DNA repair sites. Component of the BASC complex, at least composed of BRCA1, MSH2, MSH6, MLH1, ATM, BLM, RAD50, MRE11 and NBN. Interacts with histone H2AX; this requires phosphorylation of H2AX on 'Ser-139' and promotes NBN recruitment to DNA damage sites. Interacts with (phosphorylated) MDC1; promoting NBN recruitment to DNA damage sites. Interacts with (phosphorylated) RAD17; promoting NBN recruitment to DNA damage sites. Interacts (via FxF/Y motif) with ATM. Interacts with HJURP. Interacts with INTS3. Interacts with KPNA2. Interacts with TERF2; interaction is disrupted upon NBN phosphorylation by CDK2. Interacts with (phosphorylated) RBBP8/CtIP; the interaction links the role of the MRN complex in DNA double-strand break sensing to resection. Interacts with SP100; recruits NBN to PML bodies. Interacts with ATF2. Interacts with MTOR, MAPKAP1 isoform 2 and RICTOR; indicative for an association with the mTORC2 complex. Interacts with MRNIP. Interacts with UFL1; promoting UFL1 recruitment to double-strand breaks following DNA damage. Interacts with CYREN (via XLF motif). In terms of processing, ubiquitinated at Lys-436 via 'Lys-6'-linked ubiquitin chains by RNF8, promoting NBN recruitment to DNA double-strand breaks (DSBs). Ubiquitinated at Lys-684 and Lys-688 via 'Lys-63'-linked ubiquitin chains by PELI1: ubiquitination takes place following PELI1 phosphorylation and promotes ATM activation and DNA repair. Ubiquitinated at Lys-733 via 'Lys-63'-linked ubiquitin chains by the SCF(SKP2) complex: ubiquitination takes place following SKP2 phosphorylation and promotes ATM activation and DNA repair. Post-translationally, phosphorylated by ATM in response of ionizing radiation, and such phosphorylation is responsible intra-S phase checkpoint control and telomere maintenance. Phosphorylated at Ser-433 by CDK2 in S/G2 phases abolishes interaction with TERF2, enabling DCLRE1B/Apollo recruitment to telomeres. Phosphorylation at Ser-433 in response to dysfunctional telomeres promotes non-homologous end joining repair at telomeres, while dephosphorylation by PPP1CA promotes microhomology-mediated end-joining (MMEJ) repair. In terms of tissue distribution, high expression in the liver, heart and testis. Low expression in all other tissues analyzed. In the cerebellum the postmitotic Purkinje cells are marked specifically.

The protein resides in the nucleus. It is found in the chromosome. Its subcellular location is the PML body. It localises to the telomere. Its function is as follows. Component of the MRN complex, which plays a central role in double-strand break (DSB) repair, DNA recombination, maintenance of telomere integrity and meiosis. The MRN complex is involved in the repair of DNA double-strand breaks (DSBs) via homologous recombination (HR), an error-free mechanism which primarily occurs during S and G2 phases. The complex (1) mediates the end resection of damaged DNA, which generates proper single-stranded DNA, a key initial steps in HR, and is (2) required for the recruitment of other repair factors and efficient activation of ATM and ATR upon DNA damage. The MRN complex possesses single-strand endonuclease activity and double-strand-specific 3'-5' exonuclease activity, which are provided by MRE11, to initiate end resection, which is required for single-strand invasion and recombination. Within the MRN complex, NBN acts as a protein-protein adapter, which specifically recognizes and binds phosphorylated proteins, promoting their recruitment to DNA damage sites. Recruits MRE11 and RAD50 components of the MRN complex to DSBs in response to DNA damage. Promotes the recruitment of PI3/PI4-kinase family members ATM, ATR, and probably DNA-PKcs to the DNA damage sites, activating their functions. Mediates the recruitment of phosphorylated RBBP8/CtIP to DSBs, leading to cooperation between the MRN complex and RBBP8/CtIP to initiate end resection. RBBP8/CtIP specifically promotes the endonuclease activity of the MRN complex to clear DNA ends containing protein adducts. The MRN complex is also required for the processing of R-loops. NBN also functions in telomere length maintenance via its interaction with TERF2: interaction with TERF2 during G1 phase preventing recruitment of DCLRE1B/Apollo to telomeres. NBN also promotes DNA repair choice at dysfunctional telomeres: NBN phosphorylation by CDK2 promotes non-homologous end joining repair at telomeres, while unphosphorylated NBN promotes microhomology-mediated end-joining (MMEJ) repair. Enhances AKT1 phosphorylation possibly by association with the mTORC2 complex. The polypeptide is Nibrin (Mus musculus (Mouse)).